We begin with the raw amino-acid sequence, 155 residues long: Small ribosomal subunit protein bS16 (155 aa).

Residues 113–155 (ADGAPTGEAIQQKKKKAPKKAEAAEAEAPAEEPAAESADAASE) are disordered. Acidic residues predominate over residues 136–146 (AEAEAPAEEPA).

It belongs to the bacterial ribosomal protein bS16 family.

This chain is Small ribosomal subunit protein bS16, found in Mycobacteroides abscessus (strain ATCC 19977 / DSM 44196 / CCUG 20993 / CIP 104536 / JCM 13569 / NCTC 13031 / TMC 1543 / L948) (Mycobacterium abscessus).